Here is a 379-residue protein sequence, read N- to C-terminus: Alcohol dehydrogenase 1 (379 aa).

Cys47, Thr49, His69, Cys99, Cys102, Cys105, Cys113, and Cys177 together coordinate Zn(2+). Thr49 and His69 together coordinate an alcohol. Thr49 contacts NAD(+). NAD(+)-binding positions include 202–207 (GLGAVG), Asp226, Arg231, Thr272, Val295, 295–297 (VGV), Phe322, and Arg372.

The protein belongs to the zinc-containing alcohol dehydrogenase family. In terms of assembly, homodimer. It depends on Zn(2+) as a cofactor.

The protein resides in the cytoplasm. It carries out the reaction a primary alcohol + NAD(+) = an aldehyde + NADH + H(+). The catalysed reaction is a secondary alcohol + NAD(+) = a ketone + NADH + H(+). This Hordeum vulgare (Barley) protein is Alcohol dehydrogenase 1 (ADH1).